We begin with the raw amino-acid sequence, 284 residues long: 2,3,4,5-tetrahydropyridine-2,6-dicarboxylate N-succinyltransferase (284 aa).

Residues arginine 111 and aspartate 148 each contribute to the substrate site.

The protein belongs to the transferase hexapeptide repeat family. In terms of assembly, homotrimer.

Its subcellular location is the cytoplasm. It carries out the reaction (S)-2,3,4,5-tetrahydrodipicolinate + succinyl-CoA + H2O = (S)-2-succinylamino-6-oxoheptanedioate + CoA. It functions in the pathway amino-acid biosynthesis; L-lysine biosynthesis via DAP pathway; LL-2,6-diaminopimelate from (S)-tetrahydrodipicolinate (succinylase route): step 1/3. The polypeptide is 2,3,4,5-tetrahydropyridine-2,6-dicarboxylate N-succinyltransferase (Agrobacterium fabrum (strain C58 / ATCC 33970) (Agrobacterium tumefaciens (strain C58))).